A 343-amino-acid chain; its full sequence is Protein RecA (343 aa).

Residue 66-73 (GPESSGKT) coordinates ATP.

This sequence belongs to the RecA family.

The protein resides in the cytoplasm. In terms of biological role, can catalyze the hydrolysis of ATP in the presence of single-stranded DNA, the ATP-dependent uptake of single-stranded DNA by duplex DNA, and the ATP-dependent hybridization of homologous single-stranded DNAs. It interacts with LexA causing its activation and leading to its autocatalytic cleavage. The protein is Protein RecA of Rickettsia bellii (strain OSU 85-389).